A 294-amino-acid polypeptide reads, in one-letter code: Shikimate dehydrogenase (NADP(+)) (294 aa).

Shikimate is bound by residues 25–27 (SAS) and Thr72. The active-site Proton acceptor is Lys76. Residues Asn97 and Asp112 each contribute to the shikimate site. Residues 136-140 (GAGGA) and Thr234 each bind NADP(+). Residue Tyr236 coordinates shikimate. Gly257 is a binding site for NADP(+).

This sequence belongs to the shikimate dehydrogenase family. As to quaternary structure, homodimer.

The enzyme catalyses shikimate + NADP(+) = 3-dehydroshikimate + NADPH + H(+). It functions in the pathway metabolic intermediate biosynthesis; chorismate biosynthesis; chorismate from D-erythrose 4-phosphate and phosphoenolpyruvate: step 4/7. Its function is as follows. Involved in the biosynthesis of the chorismate, which leads to the biosynthesis of aromatic amino acids. Catalyzes the reversible NADPH linked reduction of 3-dehydroshikimate (DHSA) to yield shikimate (SA). The protein is Shikimate dehydrogenase (NADP(+)) of Symbiobacterium thermophilum (strain DSM 24528 / JCM 14929 / IAM 14863 / T).